The primary structure comprises 141 residues: Lutropin subunit beta (141 aa).

Residues 1–20 form the signal peptide; sequence MERLQGLLLWLLLSPSVVWA. Intrachain disulfides connect Cys29-Cys77, Cys43-Cys92, Cys46-Cys130, Cys54-Cys108, Cys58-Cys110, and Cys113-Cys120. An N-linked (GlcNAc...) asparagine glycan is attached at Asn33.

This sequence belongs to the glycoprotein hormones subunit beta family. In terms of assembly, heterodimer of a common alpha chain and a unique beta chain which confers biological specificity to thyrotropin, lutropin, follitropin and gonadotropin.

Its subcellular location is the secreted. Promotes spermatogenesis and ovulation by stimulating the testes and ovaries to synthesize steroids. This chain is Lutropin subunit beta (Lhb), found in Rattus norvegicus (Rat).